A 489-amino-acid chain; its full sequence is Protein LMBR1L (489 aa).

Residues 1 to 21 are Extracellular-facing; it reads MEAPDYEVLSVREQLFHERIR. Residues 1–59 form an interaction with LGB region; it reads MEAPDYEVLSVREQLFHERIRECIISTLLFATLYILCHIFLTRFKKPAEFTTVDDEDAT. The segment at 1–76 is LCN1-binding; it reads MEAPDYEVLS…LCTFTLAIAL (76 aa). A helical membrane pass occupies residues 22–42; it reads ECIISTLLFATLYILCHIFLT. Topologically, residues 43–66 are cytoplasmic; sequence RFKKPAEFTTVDDEDATVNKIALE. A helical membrane pass occupies residues 67–87; it reads LCTFTLAIALGAVLLLPFSII. Over 88 to 114 the chain is Extracellular; sequence SNEVLLSLPRNYYIQWLNGSLIHGLWN. Residues 115 to 135 traverse the membrane as a helical segment; the sequence is LVFLFSNLSLIFLMPFAYFFT. The Cytoplasmic segment spans residues 136–154; the sequence is ESEGFAGSRKGVLGRVYET. A helical transmembrane segment spans residues 155–175; the sequence is VVMLMLLTLLVLGMVWVASAI. Topologically, residues 176 to 196 are extracellular; sequence VDKNKANRESLYDFWEYYLPY. Residues 197–217 form a helical membrane-spanning segment; the sequence is LYSCISFLGVLLLLVCTPLGL. At 218-305 the chain is on the cytoplasmic side; the sequence is ARMFSVTGKL…NLGYPLAMLC (88 aa). A helical transmembrane segment spans residues 306-326; sequence LLVLTGLSVLIVAIHILELLI. Residues 327–350 lie on the Extracellular side of the membrane; sequence DEAAMPRGMQGTSLGQVSFSKLGS. Residues 351–371 traverse the membrane as a helical segment; sequence FGAVIQVVLIFYLMVSSVVGF. Residues 372–388 lie on the Cytoplasmic side of the membrane; that stretch reads YSSPLFRSLRPRWHDTA. Residues 389 to 409 form a helical membrane-spanning segment; sequence MTQIIGNCVCLLVLSSALPVF. Topologically, residues 410–431 are extracellular; that stretch reads SRTLGLTRFDLLGDFGRFNWLG. The helical transmembrane segment at 432 to 452 threads the bilayer; that stretch reads NFYIVFLYNAAFAGLTTLCLV. At 453–489 the chain is on the cytoplasmic side; the sequence is KTFTAAVRAELIRAFGLDRLPLPVSGFPQASRKTQHQ.

Belongs to the LIMR family. In terms of assembly, dimer. Can also form higher oligomers. Interacts with LCN1; this interaction mediates the endocytosis of LCN1. Interacts with UBAC2, FAF2, VCP, AMFR, ZNRF3, CTNNB1, LRP6, GSK3A and GSK3B. Interacts with DVL2 and RNF43. Interaction with SCGB1A1 has been observed in PubMed:16423471, but not in PubMed:23964685. Interaction with LGB which mediates the endocytosis of LGB has been observed in PubMed:17991420, but not in PubMed:23964685. As to expression, expressed in testis, pituitary gland, adrenal gland, trachea, placenta, thymus, cerebellum, stomach, mammary gland, spinal cord. A weaker expression is detected in colon, pancreas, and prostate.

Its subcellular location is the cell membrane. The protein localises to the endoplasmic reticulum membrane. In terms of biological role, plays an essential role in lymphocyte development by negatively regulating the canonical Wnt signaling pathway. In association with UBAC2 and E3 ubiquitin-protein ligase AMFR, promotes the ubiquitin-mediated degradation of CTNNB1 and Wnt receptors FZD6 and LRP6. LMBR1L stabilizes the beta-catenin destruction complex that is required for regulating CTNNB1 levels. Acts as a LCN1 receptor and can mediate its endocytosis. This chain is Protein LMBR1L (LMBR1L), found in Homo sapiens (Human).